Here is a 254-residue protein sequence, read N- to C-terminus: Alcohol dehydrogenase (254 aa).

Position 10–33 (10–33 (FVAGLGGIGLDTSREIVKSGPKNL)) interacts with NAD(+). Residue S138 coordinates substrate. Y151 (proton acceptor) is an active-site residue.

This sequence belongs to the short-chain dehydrogenases/reductases (SDR) family. As to quaternary structure, homodimer.

It catalyses the reaction a primary alcohol + NAD(+) = an aldehyde + NADH + H(+). The catalysed reaction is a secondary alcohol + NAD(+) = a ketone + NADH + H(+). The chain is Alcohol dehydrogenase (Adh) from Drosophila picticornis (Fruit fly).